The primary structure comprises 174 residues: Ly6/PLAUR domain-containing protein 6 (174 aa).

Positions 1-22 (MEPWPLMAWGLMLTAITGWIKA) are cleaved as a signal peptide. The region spanning 47 to 141 (FKCFTCEDAP…PRNETDAIFS (95 aa)) is the UPAR/Ly6 domain. Cystine bridges form between Cys-49/Cys-77, Cys-52/Cys-61, Cys-70/Cys-96, Cys-102/Cys-121, Cys-107/Cys-118, and Cys-122/Cys-127. 2 N-linked (GlcNAc...) asparagine glycosylation sites follow: Asn-134 and Asn-147. Ser-149 carries the GPI-anchor amidated serine lipid modification. Positions 150 to 174 (AQSTQTLPLLLLSVSITSLMLHSIN) are cleaved as a propeptide — removed in mature form.

In terms of assembly, interacts with fzd8 and lrp6.

It localises to the cell membrane. Its subcellular location is the membrane raft. Its function is as follows. Acts as an important regulator of embryogenesis through its enhancement of Wnt/beta-catenin signaling. Positively regulates Wnt/beta-catenin signaling by ensuring phosphorylation of lrp6 specifically in plasma membrane rafts and its subsequent internalization into signaling-competent vesicles. Essential for the wnt8-mediated patterning of the mesoderm and neuroectoderm during gastrulation. This is Ly6/PLAUR domain-containing protein 6 (lypd6) from Danio rerio (Zebrafish).